We begin with the raw amino-acid sequence, 272 residues long: MADS-box transcription factor 58 (272 aa).

The interval 1–41 (MHIYKEQEAEPSTGLMMPEPAPVASPGSGGSGGSGSVGAEK) is disordered. A compositionally biased stretch (gly residues) spans 27–36 (GSGGSGGSGS). Positions 43–103 (GSRGKIEIKR…GRLYEYSNNS (61 aa)) constitute an MADS-box domain. The K-box domain maps to 129-219 (AQHYQQEAAK…KSKVAESERG (91 aa)).

Expressed in the lodicule, stamen carpel and ovule primordia.

The protein localises to the nucleus. Functionally, probable transcription factor involved in the development of floral organs. Acts as a C-class protein in association with MADS3. Involved in the control of lodicule number (whorl 2), stamen specification (whorl 3), floral meristem determinacy and regulation of the carpel morphogenesis (whorl 4). Plays a more predominant role in floral meristem determinacy than MADS3. The chain is MADS-box transcription factor 58 (MADS58) from Oryza sativa subsp. japonica (Rice).